A 351-amino-acid polypeptide reads, in one-letter code: Geranylgeranyl pyrophosphate synthase (351 aa).

Positions 55, 58, and 93 each coordinate isopentenyl diphosphate. Positions 100 and 104 each coordinate Mg(2+). A dimethylallyl diphosphate-binding site is contributed by R109. R110 provides a ligand contact to isopentenyl diphosphate. Residues K196, T197, Q236, K253, and K262 each contribute to the dimethylallyl diphosphate site.

This sequence belongs to the FPP/GGPP synthase family. In terms of assembly, interacts with fps1. Mg(2+) serves as cofactor.

It localises to the cytoplasm. It is found in the nucleus. The enzyme catalyses isopentenyl diphosphate + dimethylallyl diphosphate = (2E)-geranyl diphosphate + diphosphate. It catalyses the reaction isopentenyl diphosphate + (2E)-geranyl diphosphate = (2E,6E)-farnesyl diphosphate + diphosphate. The catalysed reaction is isopentenyl diphosphate + (2E,6E)-farnesyl diphosphate = (2E,6E,10E)-geranylgeranyl diphosphate + diphosphate. The protein operates within isoprenoid biosynthesis; farnesyl diphosphate biosynthesis; farnesyl diphosphate from geranyl diphosphate and isopentenyl diphosphate: step 1/1. Its pathway is isoprenoid biosynthesis; geranyl diphosphate biosynthesis; geranyl diphosphate from dimethylallyl diphosphate and isopentenyl diphosphate: step 1/1. It participates in isoprenoid biosynthesis; geranylgeranyl diphosphate biosynthesis; geranylgeranyl diphosphate from farnesyl diphosphate and isopentenyl diphosphate: step 1/1. Functionally, catalyzes the trans-addition of the 3 molecules of IPP onto DMAPP to form geranylgeranyl pyrophosphate. Required for the membrane attachment of ypt7 and rhb1. May be involved in vesicle trafficking and protein sorting. Required for forespore membrane formation. This chain is Geranylgeranyl pyrophosphate synthase (spo9), found in Schizosaccharomyces pombe (strain 972 / ATCC 24843) (Fission yeast).